The primary structure comprises 779 residues: Serine/threonine-protein kinase SIK1 (779 aa).

The Protein kinase domain maps to 27–278; sequence YDVERTLGKG…IAQIRQHRWM (252 aa). ATP is bound by residues 33–41 and lysine 56; that span reads LGKGNFAVV. Aspartate 149 serves as the catalytic Proton acceptor. Phosphothreonine; by LKB1 and GSK3-beta is present on threonine 182. Residue serine 186 is modified to Phosphoserine; by autocatalysis. One can recognise a UBA domain in the interval 303 to 343; that stretch reads DYNEQVLGIMQALGIDRQRTIESLQNSSYNHFAAIYYLLLE. Threonine 322 is subject to Phosphothreonine; by CaMK1. 2 disordered regions span residues 350 to 375 and 449 to 472; these read SAQPSSRPTPAPTRQPQLRSSDLSSL and EARQGPSLEEEQEVQEPLPGSTGR. Residues 363-373 show a composition bias toward polar residues; it reads RQPQLRSSDLS. Residue serine 577 is modified to Phosphoserine; by PKA. The RK-rich region stretch occupies residues 586–612; that stretch reads KAFRQQLRKNARTKGFLGLNKIKGLAR. Residues 621 to 641 are disordered; sequence TPRGGMSTFHTPAPSSGLQGC. The span at 628–641 shows a compositional bias: polar residues; the sequence is TFHTPAPSSGLQGC.

The protein belongs to the protein kinase superfamily. CAMK Ser/Thr protein kinase family. AMPK subfamily. As to quaternary structure, interacts (when phosphorylated on Thr-182 and Ser-186) with YWHAZ. Interacts with ATP1A1. The cofactor is Mg(2+). In terms of processing, phosphorylated at Thr-182 by STK11/LKB1 in complex with STE20-related adapter-alpha (STRADA) pseudo kinase and CAB39, leading to its activation. Phosphorylation at Thr-182 promotes autophosphorylation at Ser-186, which is required for sustained activity. Autophosphorylation at Ser-186 is maintained by sequential phosphorylation at Thr-182 by GSK3-beta. GSK3-beta cannot initiate phosphorylation at Thr-182, it can only maintain it. Phosphorylation at Ser-577 by PKA promotes translocation to the cytoplasm. Phosphorylation at Thr-322 by CaMK1 following intracellular sodium concentration leads to activation. As to expression, expressed in lung, skin, ovary, heart and stomach. No expression in brain, liver or adult skeletal muscle but is present in skeletal muscle progenitor cells of the somite beginning at 9.5 dpc. Present at 8.0 dpc in the monolayer of presumptive myocardial cells but rapidly down-regulated at 8.5 dpc upon primitive ventricle formation, although still present in myocardial cells that will populate the primitive atrium and bulbus cordis. At 9.5 dpc expression is down-regulated in the primitive atrium but observed in the sinus venosus and truncus arteriosus.

It is found in the cytoplasm. Its subcellular location is the nucleus. The enzyme catalyses L-seryl-[protein] + ATP = O-phospho-L-seryl-[protein] + ADP + H(+). It catalyses the reaction L-threonyl-[protein] + ATP = O-phospho-L-threonyl-[protein] + ADP + H(+). Activated by phosphorylation on Thr-182. Also activated by phosphorylation on Thr-322 in response to increases in intracellular sodium in parallel with elevations in intracellular calcium through the reversible sodium/calcium exchanger. Functionally, serine/threonine-protein kinase involved in various processes such as cell cycle regulation, gluconeogenesis and lipogenesis regulation, muscle growth and differentiation and tumor suppression. Phosphorylates HDAC4, HDAC5, PPME1, SREBF1, CRTC1/TORC1 and CRTC2/TORC2. Acts as a tumor suppressor and plays a key role in p53/TP53-dependent anoikis, a type of apoptosis triggered by cell detachment: required for phosphorylation of p53/TP53 in response to loss of adhesion and is able to suppress metastasis. Part of a sodium-sensing signaling network, probably by mediating phosphorylation of PPME1: following increases in intracellular sodium, SIK1 is activated by CaMK1 and phosphorylates PPME1 subunit of protein phosphatase 2A (PP2A), leading to dephosphorylation of sodium/potassium-transporting ATPase ATP1A1 and subsequent increase activity of ATP1A1. Acts as a regulator of muscle cells by phosphorylating and inhibiting class II histone deacetylases HDAC4 and HDAC5, leading to promote expression of MEF2 target genes in myocytes. Also required during cardiomyogenesis by regulating the exit of cardiomyoblasts from the cell cycle via down-regulation of CDKN1C/p57Kip2. Acts as a regulator of hepatic gluconeogenesis by phosphorylating and repressing the CREB-specific coactivators CRTC1/TORC1 and CRTC2/TORC2, leading to inhibit CREB activity. Also regulates hepatic lipogenesis by phosphorylating and inhibiting SREBF1. In concert with CRTC1/TORC1, regulates the light-induced entrainment of the circadian clock by attenuating PER1 induction; represses CREB-mediated transcription of PER1 by phosphorylating and deactivating CRTC1/TORC1. The sequence is that of Serine/threonine-protein kinase SIK1 (Sik1) from Mus musculus (Mouse).